We begin with the raw amino-acid sequence, 265 residues long: Undecaprenyl-diphosphatase (265 aa).

Helical transmembrane passes span 38 to 58 (RSDF…CLAL), 75 to 95 (RDYV…GLIV), 108 to 128 (PVAW…HVAG), 135 to 155 (VVTW…GVFP), 181 to 201 (FVFM…LLEM), 215 to 235 (VAVA…WLLS), and 244 to 264 (VFAV…PAAA).

It belongs to the UppP family.

The protein resides in the cell inner membrane. The catalysed reaction is di-trans,octa-cis-undecaprenyl diphosphate + H2O = di-trans,octa-cis-undecaprenyl phosphate + phosphate + H(+). Functionally, catalyzes the dephosphorylation of undecaprenyl diphosphate (UPP). Confers resistance to bacitracin. The protein is Undecaprenyl-diphosphatase of Xanthomonas oryzae pv. oryzae (strain MAFF 311018).